The primary structure comprises 495 residues: Cytochrome P450 monooxygenase 64 (495 aa).

The chain crosses the membrane as a helical span at residues 2–22 (FLQIVTSVLATGLLYALISVL). 2 N-linked (GlcNAc...) asparagine glycosylation sites follow: Asn-25 and Asn-198. Residue Cys-428 coordinates heme.

Belongs to the cytochrome P450 family. The cofactor is heme.

The protein localises to the membrane. It participates in secondary metabolite biosynthesis. Functionally, cytochrome P450 monooxygenase that is able to use 4-ethoxybenzoic acid as a substrate for oxidation. The protein is Cytochrome P450 monooxygenase 64 of Postia placenta (strain ATCC 44394 / Madison 698-R) (Brown rot fungus).